Here is a 294-residue protein sequence, read N- to C-terminus: 4-hydroxy-tetrahydrodipicolinate synthase (294 aa).

Thr45 is a pyruvate binding site. Tyr133 (proton donor/acceptor) is an active-site residue. Residue Lys162 is the Schiff-base intermediate with substrate of the active site. Ile204 serves as a coordination point for pyruvate.

Belongs to the DapA family. As to quaternary structure, homotetramer; dimer of dimers.

The protein resides in the cytoplasm. The catalysed reaction is L-aspartate 4-semialdehyde + pyruvate = (2S,4S)-4-hydroxy-2,3,4,5-tetrahydrodipicolinate + H2O + H(+). The protein operates within amino-acid biosynthesis; L-lysine biosynthesis via DAP pathway; (S)-tetrahydrodipicolinate from L-aspartate: step 3/4. In terms of biological role, catalyzes the condensation of (S)-aspartate-beta-semialdehyde [(S)-ASA] and pyruvate to 4-hydroxy-tetrahydrodipicolinate (HTPA). This is 4-hydroxy-tetrahydrodipicolinate synthase from Bartonella tribocorum (strain CIP 105476 / IBS 506).